The chain runs to 462 residues: MKKIAIIGKPNVGKSSLFNRILKQRDAIVSETEGTTRDVKRRIVQIGEKEAEILDTGGIEDRNELFEKVKQKSLEAAKDADIILYMVDGKKLPDEEDKQIFRSLQKLGKKIALVINKIDNDKEEENVWNFYEFGTQDIFPISVSHNRKVKRLLDWVEKQLPKKETIKIEIDEELDFDELLAINEGEKKQEESNEINVAILGRVNVGKSSLLNALLKEERSIVSDVAGTTIDTIDESTIYNDKVITFIDTAGIRRRGKIVGIEKYALNRTQKMLERADVALLVLDASEGITEQDERIAGYIDKYKLACIIVLNKWDIAKKSYEEAVKEVRDRFKFLSFAPIITLSAKTRKRVDRLYDLILKVYKNYSTWLPTGQLNRVIKEAQIRHQIPSYKGKPVKILYATQYDTKPPKIALVMNRPEGLHFSYKRYLANVLRENFDLEGTPIILRPRKRGERDEEMEEESY.

EngA-type G domains lie at 2 to 164 (KKIA…PKKE) and 195 to 366 (INVA…KNYS). Residues 8 to 15 (GKPNVGKS), 55 to 59 (DTGGI), 116 to 119 (NKID), 201 to 208 (GRVNVGKS), 248 to 252 (DTAGI), and 312 to 315 (NKWD) each bind GTP. One can recognise a KH-like domain in the interval 367 to 451 (TWLPTGQLNR…PIILRPRKRG (85 aa)).

This sequence belongs to the TRAFAC class TrmE-Era-EngA-EngB-Septin-like GTPase superfamily. EngA (Der) GTPase family. As to quaternary structure, associates with the 50S ribosomal subunit.

Functionally, GTPase that plays an essential role in the late steps of ribosome biogenesis. This is GTPase Der from Nitratiruptor sp. (strain SB155-2).